We begin with the raw amino-acid sequence, 145 residues long: Transcription antitermination protein NusB (145 aa).

It belongs to the NusB family.

Functionally, involved in transcription antitermination. Required for transcription of ribosomal RNA (rRNA) genes. Binds specifically to the boxA antiterminator sequence of the ribosomal RNA (rrn) operons. In Acidothermus cellulolyticus (strain ATCC 43068 / DSM 8971 / 11B), this protein is Transcription antitermination protein NusB.